An 85-amino-acid chain; its full sequence is Sodium channel neurotoxin MeuNaTxalpha-1 (85 aa).

A signal peptide spans 1 to 19 (MNSLVMISLALLVMTGVES). In terms of domain architecture, LCN-type CS-alpha/beta spans 21-83 (RDGYIADDKN…VPIKVSGKCN (63 aa)). A specificity module, loop 1 region spans residues 27–31 (DDKNC). 4 disulfides stabilise this stretch: cysteine 31–cysteine 82, cysteine 35–cysteine 55, cysteine 41–cysteine 65, and cysteine 45–cysteine 67. 2 specificity module, loop regions span residues 58 to 62 (AGQYG) and 75 to 83 (PIKVSGKCN). Asparagine 83 carries the post-translational modification Asparagine amide.

The protein belongs to the long (4 C-C) scorpion toxin superfamily. Sodium channel inhibitor family. Alpha subfamily. C-terminal amidation does not appear to play an important role in activity, since the non-amidated recombinant toxin and the native toxin (which is amidated) show similar activities on all sodium channels tested. Expressed by the venom gland.

It localises to the secreted. Functionally, alpha toxins bind voltage-independently at site-3 of sodium channels (Nav) and inhibit the inactivation of the activated channels, thereby blocking neuronal transmission. This toxin inhibits inactivation of Nav1.6/SCN8A (EC(50)=3.1 uM) and drosophila DmNav1 (EC(50)=1.17 uM). It also shows a weak inhibition of inactivation on Nav1.2/SCN2A Nav1.3/SCN3A, and Nav1.7/SCN9A. The toxin (1 uM) does not significantly shift the midpoint of activation at the two channels, but induces a significant depolarizing shift in the V(1/2) of inactivation of the channels. The toxin has also been shown to dose-dependently stimulates intracellular signaling in DRG neurons through activation of two kinases (type II protein kinase A (PKA-II) and MAP kinases 1/3 (MAPK1/MAPK3)). Nav1.2/SCN2A is strongly suggested to be the target channel predominantly involved in this activation. In vivo, the toxin induces a dose-dependent thermal hyperalgesia lasting 30-45 minutes. This Mesobuthus eupeus (Lesser Asian scorpion) protein is Sodium channel neurotoxin MeuNaTxalpha-1.